Consider the following 78-residue polypeptide: Large ribosomal subunit protein bL28 (78 aa).

This sequence belongs to the bacterial ribosomal protein bL28 family.

In Methylobacillus flagellatus (strain ATCC 51484 / DSM 6875 / VKM B-1610 / KT), this protein is Large ribosomal subunit protein bL28.